We begin with the raw amino-acid sequence, 341 residues long: Ribonucleoside-diphosphate reductase small chain A (341 aa).

The tract at residues 1–20 (MGSLKEGQGRDMEEGESEEP) is disordered. Fe cation-binding residues include aspartate 87, glutamate 118, and histidine 121. Residue tyrosine 125 is part of the active site. Glutamate 180, glutamate 214, and histidine 217 together coordinate Fe cation.

This sequence belongs to the ribonucleoside diphosphate reductase small chain family. In terms of assembly, homodimer and heterodimer with TSO2. Heterotetramer of two R1 and two R2 chains. A radical transfer pathway may occur between Tyr-125 of protein R2 and R1. Homodimer contains a dinuclear non-heme iron center and a stable tyrosyl radical essential for activity. A transfer pathway may occur between Tyr-125 of protein R2 and R1. Interacts with CSN7. The cofactor is Fe cation. As to expression, expressed in rosette leaves, cauline leaves, stems and flowers.

The protein resides in the cytoplasm. The enzyme catalyses a 2'-deoxyribonucleoside 5'-diphosphate + [thioredoxin]-disulfide + H2O = a ribonucleoside 5'-diphosphate + [thioredoxin]-dithiol. With respect to regulation, inhibited by phenol, paracetamol, 2,4,6-trimethylphenol, resveratrol, furfuryl mercaptan, 2-thiophenthiol, phenylhydrazine, and hydroxyurea. Provides the precursors necessary for DNA synthesis. Catalyzes the biosynthesis of deoxyribonucleotides from the corresponding ribonucleotides. The chain is Ribonucleoside-diphosphate reductase small chain A (RNR2A) from Arabidopsis thaliana (Mouse-ear cress).